The sequence spans 738 residues: Ent-kaurene synthase-like 1 (738 aa).

Positions 487, 491, 631, 632, and 639 each coordinate Mg(2+). Residues 487-491 (DDFFD) carry the DDXXD motif motif.

Belongs to the terpene synthase family. Mg(2+) is required as a cofactor.

It catalyses the reaction ent-copalyl diphosphate = ent-kaur-16-ene + diphosphate. Its pathway is secondary metabolite biosynthesis; terpenoid biosynthesis. Functionally, diterpene cyclase involved in the biosynthesis of labdane-related diterpenoids (LRDs) natural products. Catalyzes the cyclization of ent-CDP into ent-kaurene. The sequence is that of Ent-kaurene synthase-like 1 from Ricinus communis (Castor bean).